Reading from the N-terminus, the 449-residue chain is Interferon-related developmental regulator 1 (449 aa).

The segment covering 1–10 (MPKNKKRNAP) has biased composition (basic residues). The tract at residues 1 to 42 (MPKNKKRNAPHRGGGGGGGSGAATSAATAGGPHRTVQPFSDE) is disordered. A compositionally biased stretch (gly residues) spans 12-21 (RGGGGGGGSG). Over residues 22–31 (AATSAATAGG) the composition is skewed to low complexity.

This sequence belongs to the IFRD family. Interacts with PSIP1/LEDGF.

Could play a role in regulating gene activity in the proliferative and/or differentiative pathways induced by NGF. May be an autocrine factor that attenuates or amplifies the initial ligand-induced signal. The chain is Interferon-related developmental regulator 1 (Ifrd1) from Mus musculus (Mouse).